A 410-amino-acid polypeptide reads, in one-letter code: Cysteine desulfurase IscS (410 aa).

Residues 80 to 81 (AT), asparagine 160, glutamine 188, and 208 to 210 (SGH) contribute to the pyridoxal 5'-phosphate site. Lysine 211 is modified (N6-(pyridoxal phosphate)lysine). Threonine 248 is a pyridoxal 5'-phosphate binding site. The active-site Cysteine persulfide intermediate is cysteine 334. Cysteine 334 is a [2Fe-2S] cluster binding site.

This sequence belongs to the class-V pyridoxal-phosphate-dependent aminotransferase family. NifS/IscS subfamily. As to quaternary structure, homodimer. Forms a heterotetramer with IscU, interacts with other sulfur acceptors. Requires pyridoxal 5'-phosphate as cofactor.

It is found in the cytoplasm. The enzyme catalyses (sulfur carrier)-H + L-cysteine = (sulfur carrier)-SH + L-alanine. It participates in cofactor biosynthesis; iron-sulfur cluster biosynthesis. Functionally, master enzyme that delivers sulfur to a number of partners involved in Fe-S cluster assembly, tRNA modification or cofactor biosynthesis. Catalyzes the removal of elemental sulfur atoms from cysteine to produce alanine. Functions as a sulfur delivery protein for Fe-S cluster synthesis onto IscU, an Fe-S scaffold assembly protein, as well as other S acceptor proteins. The polypeptide is Cysteine desulfurase IscS (Rickettsia rickettsii (strain Iowa)).